Reading from the N-terminus, the 195-residue chain is Imidazoleglycerol-phosphate dehydratase (195 aa).

It belongs to the imidazoleglycerol-phosphate dehydratase family.

The protein resides in the cytoplasm. The catalysed reaction is D-erythro-1-(imidazol-4-yl)glycerol 3-phosphate = 3-(imidazol-4-yl)-2-oxopropyl phosphate + H2O. Its pathway is amino-acid biosynthesis; L-histidine biosynthesis; L-histidine from 5-phospho-alpha-D-ribose 1-diphosphate: step 6/9. This Endomicrobium trichonymphae protein is Imidazoleglycerol-phosphate dehydratase.